The chain runs to 257 residues: BTB/POZ domain-containing protein kctd15-like (257 aa).

2 positions are modified to phosphoserine: S9 and S12. A BTB domain is found at A30–E100.

The protein is BTB/POZ domain-containing protein kctd15-like (kctd15l) of Danio rerio (Zebrafish).